A 651-amino-acid chain; its full sequence is Probable potassium transport system protein Kup (651 aa).

12 consecutive transmembrane segments (helical) span residues L30 to L50, I71 to V91, L124 to I144, P158 to V178, F190 to I210, A233 to Y253, W268 to L288, L310 to F330, I358 to F378, A387 to A407, W413 to F433, and L437 to I457.

This sequence belongs to the HAK/KUP transporter (TC 2.A.72) family.

It localises to the cell membrane. The enzyme catalyses K(+)(in) + H(+)(in) = K(+)(out) + H(+)(out). Functionally, transport of potassium into the cell. Likely operates as a K(+):H(+) symporter. The polypeptide is Probable potassium transport system protein Kup (Cutibacterium acnes (strain DSM 16379 / KPA171202) (Propionibacterium acnes)).